Reading from the N-terminus, the 204-residue chain is Pyridoxal 5'-phosphate synthase subunit PdxT (204 aa).

G52–S54 is an L-glutamine binding site. C84 functions as the Nucleophile in the catalytic mechanism. L-glutamine-binding positions include R116 and I143–R144. Active-site charge relay system residues include H184 and E186.

This sequence belongs to the glutaminase PdxT/SNO family. In terms of assembly, in the presence of PdxS, forms a dodecamer of heterodimers. Only shows activity in the heterodimer.

The enzyme catalyses aldehydo-D-ribose 5-phosphate + D-glyceraldehyde 3-phosphate + L-glutamine = pyridoxal 5'-phosphate + L-glutamate + phosphate + 3 H2O + H(+). It catalyses the reaction L-glutamine + H2O = L-glutamate + NH4(+). It functions in the pathway cofactor biosynthesis; pyridoxal 5'-phosphate biosynthesis. Its function is as follows. Catalyzes the hydrolysis of glutamine to glutamate and ammonia as part of the biosynthesis of pyridoxal 5'-phosphate. The resulting ammonia molecule is channeled to the active site of PdxS. The sequence is that of Pyridoxal 5'-phosphate synthase subunit PdxT from Pyrobaculum arsenaticum (strain DSM 13514 / JCM 11321 / PZ6).